Reading from the N-terminus, the 130-residue chain is Small ribosomal subunit protein uS8y (130 aa).

This sequence belongs to the universal ribosomal protein uS8 family.

The sequence is that of Small ribosomal subunit protein uS8y (RPS15AC) from Arabidopsis thaliana (Mouse-ear cress).